The primary structure comprises 419 residues: Isocitrate dehydrogenase [NADP] 1 (419 aa).

Residue Thr105 coordinates NADP(+). Residues Ser114, Asn116, Arg120, Arg130, and Arg154 each coordinate D-threo-isocitrate. A Mg(2+)-binding site is contributed by Asp308. NADP(+)-binding positions include 340–346, Asn353, Tyr392, and Arg396; that span reads HGTAPKY.

This sequence belongs to the isocitrate and isopropylmalate dehydrogenases family. As to quaternary structure, homodimer. Mg(2+) is required as a cofactor. The cofactor is Mn(2+).

The catalysed reaction is D-threo-isocitrate + NADP(+) = 2-oxoglutarate + CO2 + NADPH. Its activity is regulated as follows. IDH activity is not significantly affected by monovalent cations. The combined addition of Mn(2+) and another divalent cation results in the decrease of the activity. Catalyzes the oxidative decarboxylation of isocitrate to 2-oxoglutarate and carbon dioxide with the concomitant reduction of NADP(+). Cannot use NAD(+). This chain is Isocitrate dehydrogenase [NADP] 1, found in Psychrobacter sp. (strain 13A).